Consider the following 89-residue polypeptide: Heat shock protein 30A (89 aa).

Composition is skewed to basic and acidic residues over residues M1–R11 and L19–E39. The tract at residues M1–L55 is disordered. The 55-residue stretch at S35–E89 folds into the sHSP domain.

It belongs to the small heat shock protein (HSP20) family.

The sequence is that of Heat shock protein 30A (hsp30a) from Xenopus laevis (African clawed frog).